A 937-amino-acid polypeptide reads, in one-letter code: Isoleucine--tRNA ligase (937 aa).

Positions Pro-58–His-68 match the 'HIGH' region motif. An L-isoleucyl-5'-AMP-binding site is contributed by Glu-561. The 'KMSKS' region motif lies at Lys-602–Ser-606. ATP is bound at residue Lys-605. Zn(2+)-binding residues include Cys-900, Cys-903, Cys-920, and Cys-923.

This sequence belongs to the class-I aminoacyl-tRNA synthetase family. IleS type 1 subfamily. As to quaternary structure, monomer. It depends on Zn(2+) as a cofactor.

It localises to the cytoplasm. It carries out the reaction tRNA(Ile) + L-isoleucine + ATP = L-isoleucyl-tRNA(Ile) + AMP + diphosphate. Functionally, catalyzes the attachment of isoleucine to tRNA(Ile). As IleRS can inadvertently accommodate and process structurally similar amino acids such as valine, to avoid such errors it has two additional distinct tRNA(Ile)-dependent editing activities. One activity is designated as 'pretransfer' editing and involves the hydrolysis of activated Val-AMP. The other activity is designated 'posttransfer' editing and involves deacylation of mischarged Val-tRNA(Ile). This is Isoleucine--tRNA ligase from Alcanivorax borkumensis (strain ATCC 700651 / DSM 11573 / NCIMB 13689 / SK2).